A 381-amino-acid chain; its full sequence is Lipopolysaccharide 1,2-N-acetylglucosaminetransferase (381 aa).

The protein belongs to the glycosyltransferase group 1 family. Glycosyltransferase 4 subfamily.

It localises to the cell inner membrane. It catalyses the reaction UDP-N-acetyl-alpha-D-glucosamine + [lipopolysaccharide] = UDP + N-acetyl-alpha-D-glucosaminyl-[lipopolysaccharide].. It participates in bacterial outer membrane biogenesis; LPS core biosynthesis. Its function is as follows. Transferase involved in the biosynthesis of the core oligosaccharide region of lipopolysaccharide (LPS). Catalyzes the addition of the terminal N-acetyl-D-glucosamine (GlcNAc) group to the outer-core glucose II, the last step of the lipid A-core oligosaccharide biosynthesis. This Salmonella typhimurium (strain LT2 / SGSC1412 / ATCC 700720) protein is Lipopolysaccharide 1,2-N-acetylglucosaminetransferase.